The chain runs to 625 residues: MVKLDYRALGLKVGLEIHIQLDTGRKLFCHCKPELKNTEPDFRIIRRLRPAMSELSSIDPAALWEFRKMKTMMYEGFNDVTCLVELDEEPPHEPDEESLLLALAVSKVFNAKVFDEVYVMRKVVIDGSNVSGFQRTMVIAHDGLAEFLNYKVPIWTISLEEDAARRIEDKGDVTVYRLDRLGIPLIEVSTGPMEYPPNSIMEVAWLIGRTIMNTRRTKRGLGAIRQDLNISIAKGAKTEVKGVPELSLIPKVIEYEALRQVNLLKIKDELNNRGLSRESYTPDLIDVTSVFSSTKSSIVKRTINEGGIVAALKAPGLRGILGFELQPGRRFGSELADRVRAWTRLGGLMHSDELPGYGISKEEVAAVASRLGVDSFILLMGPQGVELQEAAKVIVDRIKEAFDGVPEETRAAKEDGTTYFMRPRPGAARMYPETDLRPIRITFELLAKADKYVPEPIDKQIERYTSMGMSRELARQLASSEYSIEAEELIKKYEDKVNPTLVASIFVNMIGGMGKNIEQLNIIQVVDKLLELYVNGRVTREAIQDTIQKYVEEGGRRGVEDIINEGGLWRMQYSEVASIVKSLINNGVKDKGKLMSIIMRDYRGRVDSRDVEKAINEFLSSEQKS.

It belongs to the GatB/GatE family. GatE subfamily. As to quaternary structure, heterodimer of GatD and GatE.

It catalyses the reaction L-glutamyl-tRNA(Gln) + L-glutamine + ATP + H2O = L-glutaminyl-tRNA(Gln) + L-glutamate + ADP + phosphate + H(+). Functionally, allows the formation of correctly charged Gln-tRNA(Gln) through the transamidation of misacylated Glu-tRNA(Gln) in organisms which lack glutaminyl-tRNA synthetase. The reaction takes place in the presence of glutamine and ATP through an activated gamma-phospho-Glu-tRNA(Gln). The GatDE system is specific for glutamate and does not act on aspartate. In Caldivirga maquilingensis (strain ATCC 700844 / DSM 13496 / JCM 10307 / IC-167), this protein is Glutamyl-tRNA(Gln) amidotransferase subunit E.